The sequence spans 213 residues: Neuroligin-4, X-linked (213 aa).

Residues 1-56 are disordered; it reads FQYVSTTTKVPPPDMTSFPYGTRRSPAKIWPTTKRPAITPANNPKHSKDPHKTGPE. The Extracellular segment spans residues 1 to 73; sequence FQYVSTTTKV…TKRDYSTELS (73 aa). The span at 46 to 55 shows a compositional bias: basic and acidic residues; it reads HSKDPHKTGP. A helical transmembrane segment spans residues 74-94; the sequence is VTIAVGASLLFLNILAFAALY. The Cytoplasmic portion of the chain corresponds to 95-213; that stretch reads YKKDKRRHET…LPHGHSTTRV (119 aa). S109 carries the phosphoserine modification.

Belongs to the type-B carboxylesterase/lipase family. Homodimer. Interacts with NRXN1 in a calcium-dependent manner. Interaction with neurexins is mediated by heparan sulfate glycan modification on neurexin. Interacts through its C-terminus with DLG4/PSD-95 third PDZ domain.

Its subcellular location is the cell membrane. It is found in the postsynaptic density membrane. In terms of biological role, cell surface protein involved in cell-cell-interactions via its interactions with neurexin family members. The chain is Neuroligin-4, X-linked (NLGN4X) from Macaca mulatta (Rhesus macaque).